Here is a 238-residue protein sequence, read N- to C-terminus: Orotidine 5'-phosphate decarboxylase (238 aa).

Substrate is bound by residues Asp-10, Lys-32, 59–68 (DLKLHDIPNT), Thr-122, Arg-184, Gln-193, Gly-213, and Arg-214. The active-site Proton donor is the Lys-61.

It belongs to the OMP decarboxylase family. Type 1 subfamily. As to quaternary structure, homodimer.

The catalysed reaction is orotidine 5'-phosphate + H(+) = UMP + CO2. It participates in pyrimidine metabolism; UMP biosynthesis via de novo pathway; UMP from orotate: step 2/2. In terms of biological role, catalyzes the decarboxylation of orotidine 5'-monophosphate (OMP) to uridine 5'-monophosphate (UMP). In Bacillus cereus (strain AH820), this protein is Orotidine 5'-phosphate decarboxylase.